The sequence spans 292 residues: NAD kinase (292 aa).

Residue Asp73 is the Proton acceptor of the active site. NAD(+) contacts are provided by residues 73-74, 147-148, His158, Arg175, Asp177, 188-193, and Gln247; these read DG, NE, and TAYSLS.

The protein belongs to the NAD kinase family. Requires a divalent metal cation as cofactor.

It localises to the cytoplasm. The enzyme catalyses NAD(+) + ATP = ADP + NADP(+) + H(+). Its function is as follows. Involved in the regulation of the intracellular balance of NAD and NADP, and is a key enzyme in the biosynthesis of NADP. Catalyzes specifically the phosphorylation on 2'-hydroxyl of the adenosine moiety of NAD to yield NADP. The polypeptide is NAD kinase (Escherichia coli (strain SMS-3-5 / SECEC)).